We begin with the raw amino-acid sequence, 192 residues long: 7-methyl-GTP pyrophosphatase (192 aa).

The active-site Proton acceptor is the Asp-69.

Belongs to the Maf family. YceF subfamily. The cofactor is a divalent metal cation.

It is found in the cytoplasm. The catalysed reaction is N(7)-methyl-GTP + H2O = N(7)-methyl-GMP + diphosphate + H(+). Nucleoside triphosphate pyrophosphatase that hydrolyzes 7-methyl-GTP (m(7)GTP). May have a dual role in cell division arrest and in preventing the incorporation of modified nucleotides into cellular nucleic acids. The sequence is that of 7-methyl-GTP pyrophosphatase (maf-2) from Pseudomonas putida (strain ATCC 47054 / DSM 6125 / CFBP 8728 / NCIMB 11950 / KT2440).